The chain runs to 251 residues: ATP synthase subunit a (251 aa).

A run of 7 helical transmembrane segments spans residues 28–48 (FTQS…IIAL), 63–80 (LVEI…EQIG), 86–106 (FFPF…LGLF), 115–135 (HVAV…AVAL), 154–176 (ALAP…SLSI), 195–215 (FMFL…LLPM), and 219–239 (VTLV…FAIL).

It belongs to the ATPase A chain family. F-type ATPases have 2 components, CF(1) - the catalytic core - and CF(0) - the membrane proton channel. CF(1) has five subunits: alpha(3), beta(3), gamma(1), delta(1), epsilon(1). CF(0) has three main subunits: a(1), b(2) and c(9-12). The alpha and beta chains form an alternating ring which encloses part of the gamma chain. CF(1) is attached to CF(0) by a central stalk formed by the gamma and epsilon chains, while a peripheral stalk is formed by the delta and b chains.

It is found in the cell inner membrane. Functionally, key component of the proton channel; it plays a direct role in the translocation of protons across the membrane. The sequence is that of ATP synthase subunit a from Granulibacter bethesdensis (strain ATCC BAA-1260 / CGDNIH1).